A 335-amino-acid polypeptide reads, in one-letter code: tRNA N6-adenosine threonylcarbamoyltransferase (335 aa).

Residues H111 and H115 each contribute to the Fe cation site. Residues 133-137 (LISGG), D166, G179, and N276 each bind substrate. Fe cation is bound at residue D301.

This sequence belongs to the KAE1 / TsaD family. Fe(2+) is required as a cofactor.

It is found in the cytoplasm. The enzyme catalyses L-threonylcarbamoyladenylate + adenosine(37) in tRNA = N(6)-L-threonylcarbamoyladenosine(37) in tRNA + AMP + H(+). Functionally, required for the formation of a threonylcarbamoyl group on adenosine at position 37 (t(6)A37) in tRNAs that read codons beginning with adenine. Is involved in the transfer of the threonylcarbamoyl moiety of threonylcarbamoyl-AMP (TC-AMP) to the N6 group of A37, together with TsaE and TsaB. TsaD likely plays a direct catalytic role in this reaction. The sequence is that of tRNA N6-adenosine threonylcarbamoyltransferase from Wolbachia sp. subsp. Drosophila simulans (strain wRi).